We begin with the raw amino-acid sequence, 513 residues long: OTU domain-containing protein 5-A (513 aa).

Disordered stretches follow at residues 1-75 and 99-136; these read MTIL…GGAG and GPGH…DEYE. Residues 166 to 289 enclose the OTU domain; the sequence is FIIKQMKEDG…NIHYNSVVNP (124 aa). The interval 171–177 is cys-loop; the sequence is MKEDGAC. Asp-174 is an active-site residue. Cys-177 (nucleophile) is an active-site residue. Positions 226–236 are variable-loop; sequence KRKNNCHGNHI. The his-loop stretch occupies residues 277-282; sequence YHRNIH. His-282 is an active-site residue. The disordered stretch occupies residues 387–446; sequence LEEWSGRSPRQRSTAGSPEHPDLHAELCMKPPSPGAPLILGKPPSPCAPGPSNQMSTGAD.

Belongs to the peptidase C85 family.

It catalyses the reaction Thiol-dependent hydrolysis of ester, thioester, amide, peptide and isopeptide bonds formed by the C-terminal Gly of ubiquitin (a 76-residue protein attached to proteins as an intracellular targeting signal).. Deubiquitinating enzyme that may function as negative regulator of the innate immune system. Has peptidase activity towards 'Lys-48'- and 'Lys-63'-linked polyubiquitin chains. Can also cleave 'Lys-11'-linked ubiquitin chains (in vitro). The protein is OTU domain-containing protein 5-A (otud5-a) of Xenopus laevis (African clawed frog).